The sequence spans 160 residues: Aspartate carbamoyltransferase regulatory chain (160 aa).

Cys110, Cys115, Cys140, and Cys143 together coordinate Zn(2+).

The protein belongs to the PyrI family. Contains catalytic and regulatory chains. Zn(2+) serves as cofactor.

Its function is as follows. Involved in allosteric regulation of aspartate carbamoyltransferase. The sequence is that of Aspartate carbamoyltransferase regulatory chain from Hyperthermus butylicus (strain DSM 5456 / JCM 9403 / PLM1-5).